The sequence spans 871 residues: DNA mismatch repair protein MutS (871 aa).

ATP is bound at residue 625-632 (GPNMAGKS).

It belongs to the DNA mismatch repair MutS family.

Functionally, this protein is involved in the repair of mismatches in DNA. It is possible that it carries out the mismatch recognition step. This protein has a weak ATPase activity. The chain is DNA mismatch repair protein MutS from Chlorobium limicola (strain DSM 245 / NBRC 103803 / 6330).